A 139-amino-acid polypeptide reads, in one-letter code: Protein FAM237B (139 aa).

A signal peptide spans 1-24; the sequence is MCFATRRWFYLHLGCMMLINLVNA. Methionine 112 is modified (methionine amide). Positions 113–139 are cleaved as a propeptide — removed in the mature form; that stretch reads GRRQVMPPKYNFPQKITGGNLNVYLRE.

In terms of processing, the active form requires C-terminal amidation and disulfide bond formation.

It localises to the secreted. In terms of biological role, may be capable of activating GPR83 via the GNAQ signaling pathway. This is Protein FAM237B from Homo sapiens (Human).